A 1185-amino-acid polypeptide reads, in one-letter code: DNA-directed RNA polymerase subunit beta' (1185 aa).

Zn(2+) contacts are provided by Cys-67, Cys-69, Cys-82, and Cys-85. Mg(2+) contacts are provided by Asp-457, Asp-459, and Asp-461. Residues Cys-802, Cys-876, Cys-883, and Cys-886 each contribute to the Zn(2+) site.

It belongs to the RNA polymerase beta' chain family. The RNAP catalytic core consists of 2 alpha, 1 beta, 1 beta' and 1 omega subunit. When a sigma factor is associated with the core the holoenzyme is formed, which can initiate transcription. It depends on Mg(2+) as a cofactor. Zn(2+) serves as cofactor.

The enzyme catalyses RNA(n) + a ribonucleoside 5'-triphosphate = RNA(n+1) + diphosphate. Its function is as follows. DNA-dependent RNA polymerase catalyzes the transcription of DNA into RNA using the four ribonucleoside triphosphates as substrates. In Clostridium novyi (strain NT), this protein is DNA-directed RNA polymerase subunit beta'.